The sequence spans 332 residues: L-lactate dehydrogenase A chain (332 aa).

Residues 29 to 57 (GAVGMACAISILMKDLADELALVDVVEDK) and arginine 99 contribute to the NAD(+) site. Substrate contacts are provided by arginine 106, asparagine 138, and arginine 169. Asparagine 138 provides a ligand contact to NAD(+). Residue histidine 193 is the Proton acceptor of the active site. Threonine 248 provides a ligand contact to substrate.

It belongs to the LDH/MDH superfamily. LDH family. In terms of assembly, homotetramer.

Its subcellular location is the cytoplasm. It catalyses the reaction (S)-lactate + NAD(+) = pyruvate + NADH + H(+). Its pathway is fermentation; pyruvate fermentation to lactate; (S)-lactate from pyruvate: step 1/1. Interconverts simultaneously and stereospecifically pyruvate and lactate with concomitant interconversion of NADH and NAD(+). This chain is L-lactate dehydrogenase A chain (LDHA), found in Python regius (Ball python).